The following is a 44-amino-acid chain: Photosystem I reaction center subunit IX (44 aa).

Residues tryptophan 9–valine 29 form a helical membrane-spanning segment.

This sequence belongs to the PsaJ family.

It is found in the cellular thylakoid membrane. Functionally, may help in the organization of the PsaE and PsaF subunits. The protein is Photosystem I reaction center subunit IX of Prochlorococcus marinus (strain MIT 9211).